The sequence spans 555 residues: WRKY transcription factor WRKY24 (555 aa).

Disordered regions lie at residues 38–65 (GGGGVSRYKAMTPPSLPLSPPPVSPSSF) and 132–248 (QTAP…CTFP). Over residues 51–61 (PSLPLSPPPVS) the composition is skewed to pro residues. The span at 163 to 194 (QQQQQPWGYQQQPAGMDAGANAASFGAAPFQA) shows a compositional bias: low complexity. The WRKY 1 DNA-binding region spans 214–278 (SQRRSSDDGY…YKGTHNHAKP (65 aa)). Residues 253–259 (KKKVERS) carry the Nuclear localization signal motif. Residues 270-367 (KGTHNHAKPQ…EGISMAGNRT (98 aa)) are disordered. 2 stretches are compositionally biased toward polar residues: residues 277-294 (KPQNTRRNSGSSAAQVLQ) and 310-320 (TAATPENSSAS). The segment covering 347–356 (DSKRWRKDGD) has biased composition (basic and acidic residues). A DNA-binding region (WRKY 2) is located at residues 379-444 (SDIDILDDGY…YEGKHNHDVP (66 aa)). The tract at residues 466-555 (HPYLPNQPPP…DDMFFQNSLY (90 aa)) is transcription repression of gibberellic acid (GA)-induced promoters. Disordered stretches follow at residues 471–498 (NQPPPMSYQPTGPQPYALRPDGFGGQGP) and 513–555 (GFDD…NSLY).

It belongs to the WRKY group II-a family. Expressed in aleurone cells. Mostly expressed in aleurone layers and leaves, and, to a lower extent, in roots, panicles and embryos.

Its subcellular location is the nucleus. Its function is as follows. Transcription repressor. Interacts specifically with the W box (5'-(T)TGAC[CT]-3'), a frequently occurring elicitor-responsive cis-acting element. Negative regulator of both gibberellic acid (GA) and abscisic acid (ABA) signaling in aleurone cells, probably by interfering with GAM1, via the specific repression of GA- and ABA-induced promoters. The polypeptide is WRKY transcription factor WRKY24 (Oryza sativa subsp. indica (Rice)).